The chain runs to 770 residues: Signal transducer and activator of transcription 3 (770 aa).

Position 2 is an N-acetylalanine (Ala2). N6-acetyllysine occurs at positions 49 and 87. The Essential for nuclear import signature appears at 150–162 (DVRKRVQDLEQKM). Residues 580–670 (WNEGYIMGFI…DATNILVSPL (91 aa)) enclose the SH2 domain. Allysine; alternate is present on residues Lys601, Lys615, and Lys631. An N6-acetyllysine; alternate mark is found at Lys601, Lys615, and Lys631. The residue at position 640 (Tyr640) is a Phosphotyrosine; by TYK2. Residue Lys685 is modified to Allysine; alternate. Lys685 carries the post-translational modification N6-acetyllysine; alternate. Tyr705 carries the phosphotyrosine; by FER and PTK6 modification. Lys707 is subject to N6-acetyllysine. Position 714 is a phosphothreonine (Thr714). A Phosphoserine; by DYRK2, NLK, NEK6, IRAK1, RPS6KA5, ZIPK/DAPK3 and PKC/PRKCE modification is found at Ser727.

Belongs to the transcription factor STAT family. Forms a homodimer or a heterodimer with a related family member (at least STAT1). Component of a promoter-binding complex composed of STAT3, NFATC3 and NFATC4; complex formation is enhanced by calcineurin. Interacts with IL31RA, NCOA1, PELP1, SIPAR, SOCS7, STATIP1 and TMF1. Interacts with IL23R in presence of IL23. Interacts (via SH2 domain) with NLK. Interacts with ARL2BP; the interaction is enhanced by LIF and JAK1 expression. Interacts with KPNA4 and KPNA5; KPNA4 may be the primary mediator of nuclear import. Interacts with CAV2; the interaction is increased on insulin-induced tyrosine phosphorylation of CAV2 and leads to STAT3 activation. Interacts with ARL2BP; interaction is enhanced with ARL2. Interacts with NEK6. Binds to CDK9 when activated and nuclear. Interacts with BMX. Interacts with ZIPK/DAPK3. Interacts with PIAS3; the interaction occurs on stimulation by IL6, CNTF or OSM and inhibits the DNA binding activity of STAT3. In prostate cancer cells, interacts with PRKCE and promotes DNA binding activity of STAT3. Interacts with STMN3, antagonizing its microtubule-destabilizing activity. Interacts with the 'Lys-129' acetylated form of BIRC5/survivin. Interacts with FER. Interacts (via SH2 domain) with EIF2AK2/PKR (via the kinase catalytic domain). Interacts with FGFR4. Interacts with INPP5F; the interaction is independent of STAT3 Tyr-705 phosphorylation status. Interacts with OCIAD1. Interacts with OCIAD2. Interacts (unphosphorylated or phosphorylated at Ser-727) with PHB1. Interacts and may form heterodimers with NHLH1. Found in a complex with SLC39A6, SLC39A10 and with the 'Ser-727' phosphorylated form of STAT3 throughout mitosis. Interacts (when acetylated) with EP300 (via bromo domain); interaction takes place following STAT3 acetylation by EP300 and promotes enhanceosome assembly. Interacts (when acetylated) with BRD2 (via bromo domain); interaction promotes STAT3 recruitment to chromatin and T-helper Th17 cell differentiation. Interacts with FAM220A/SIPAR; the interaction occurs in both the nucleus and the cytoplasm, is enhanced by IL6 and promotes STAT3 dephosphorylation. Interacts in both unphosphorylated and phosphorylated forms with FAM220A but interacts preferentially in the phosphorylated form in the nucleus. Interacts with PTPN2; the interaction is promoted by FAM220A and leads to STAT3 dephosphorylation which negatively regulates STAT3 transcriptional activator activity. In terms of processing, activated through tyrosine phosphorylation by BMX. Tyrosine phosphorylated in response to IL6, IL11, CNTF, LIF, KITLG/SCF, CSF1, EGF, PDGF, IFN-alpha, LEP and OSM. Activated KIT promotes phosphorylation on tyrosine residues and subsequent translocation to the nucleus. Tyrosine phosphorylated in response to constitutively activated FGFR1, FGFR2, FGFR3 and FGFR4. Phosphorylated on serine upon DNA damage, probably by ATM or ATR. Serine phosphorylation is important for the formation of stable DNA-binding STAT3 homodimers and maximal transcriptional activity. ARL2BP may participate in keeping the phosphorylated state of STAT3 within the nucleus. Tyrosine phosphorylated upon stimulation with EGF. Upon LPS challenge, phosphorylated within the nucleus by IRAK1. Upon UV-A treatment, phosphorylated on Ser-727 by RPS6KA5. Dephosphorylation on tyrosine residues by PTPN2 negatively regulates IL6/interleukin-6 signaling. Phosphorylation at Tyr-705 by PTK6, isoform M2 of PKM (PKM2) or FER leads to an increase of its transcriptional activity. Phosphorylation at Tyr-705 is increased in the presence of calcineurin. Phosphorylation at Tyr-640 by TYK2 negatively regulates transcriptional activity. Post-translationally, acetylated on lysine residues by EP300/p300, promoting its activation. Acetylation at Lys-49 and Lys-87 by EP300/p300 promotes its activation. Acetylation at Lys-87 by EP300/p300 promotes its association with BRD2 and recruitment to chromatin. Deacetylated at Lys-49 and Lys-87 by HDAC1. Acetylation at Lys-685 by EP300/p300 promotes its homodimerization and activation. Deacetylated at Lys-685 by HDAC3. Acetylated on lysine residues by CREBBP. Deacetylation by LOXL3 leads to disrupt STAT3 dimerization and inhibit STAT3 transcription activity. Oxidation of lysine residues to allysine on STAT3 preferentially takes place on lysine residues that are acetylated. Some lysine residues are oxidized to allysine by LOXL3, leading to disrupt STAT3 dimerization and inhibit STAT3 transcription activity. Oxidation of lysine residues to allysine on STAT3 preferentially takes place on lysine residues that are acetylated. In terms of processing, (Microbial infection) Phosphorylated on Tyr-705 in the presence of S.typhimurium SarA. In terms of tissue distribution, expressed in ventricular cardiomyocytes (at protein level). Expressed in the lung (at protein level). Expressed in the liver, spleen and kidney. As to expression, expressed in the liver.

The protein localises to the cytoplasm. The protein resides in the nucleus. Its function is as follows. Signal transducer and transcription activator that mediates cellular responses to interleukins, KITLG/SCF, LEP and other growth factors. Once activated, recruits coactivators, such as NCOA1 or MED1, to the promoter region of the target gene. May mediate cellular responses to activated FGFR1, FGFR2, FGFR3 and FGFR4. Upon activation of IL6ST/gp130 signaling by interleukin-6 (IL6), binds to the IL6-responsive elements identified in the promoters of various acute-phase protein genes. Activated by IL31 through IL31RA. Acts as a regulator of inflammatory response by regulating differentiation of naive CD4(+) T-cells into T-helper Th17 or regulatory T-cells (Treg): acetylation promotes its transcription activity and cell differentiation while deacetylation and oxidation of lysine residues by LOXL3 inhibits differentiation. Involved in cell cycle regulation by inducing the expression of key genes for the progression from G1 to S phase, such as CCND1. Mediates the effects of LEP on melanocortin production, body energy homeostasis and lactation. May play an apoptotic role by transctivating BIRC5 expression under LEP activation. Cytoplasmic STAT3 represses macroautophagy by inhibiting EIF2AK2/PKR activity. Plays a crucial role in basal beta cell functions, such as regulation of insulin secretion. Following JAK/STAT signaling activation and as part of a complex with NFATC3 and NFATC4, binds to the alpha-beta E4 promoter region of CRYAB and activates transcription in cardiomyocytes. Plays an important role in host defense in methicillin-resistant S.aureus lung infection by regulating the expression of the antimicrobial lectin REG3G. This chain is Signal transducer and activator of transcription 3, found in Mus musculus (Mouse).